We begin with the raw amino-acid sequence, 660 residues long: Bifunctional polymyxin resistance protein ArnA (660 aa).

Positions 1–304 (MKAVIFAYHD…TLGLVAGARL (304 aa)) are formyltransferase ArnAFT. H104 acts as the Proton donor; for formyltransferase activity in catalysis. Residues R114 and 136–140 (VKRAD) each bind (6R)-10-formyltetrahydrofolate. Residues 314 to 660 (RRIRVLILGV…RSVDIAERAS (347 aa)) are dehydrogenase ArnADH. NAD(+)-binding positions include D347 and 368–369 (DI). UDP-alpha-D-glucuronate-binding positions include A393, Y398, and 432-433 (TS). The Proton acceptor; for decarboxylase activity role is filled by E434. UDP-alpha-D-glucuronate is bound by residues R460, N492, 526–535 (KLIDGGQQKR), and Y613. Residue R619 is the Proton donor; for decarboxylase activity of the active site.

It in the N-terminal section; belongs to the Fmt family. UDP-L-Ara4N formyltransferase subfamily. The protein in the C-terminal section; belongs to the NAD(P)-dependent epimerase/dehydratase family. UDP-glucuronic acid decarboxylase subfamily. In terms of assembly, homohexamer, formed by a dimer of trimers.

It carries out the reaction UDP-alpha-D-glucuronate + NAD(+) = UDP-beta-L-threo-pentopyranos-4-ulose + CO2 + NADH. It catalyses the reaction UDP-4-amino-4-deoxy-beta-L-arabinose + (6R)-10-formyltetrahydrofolate = UDP-4-deoxy-4-formamido-beta-L-arabinose + (6S)-5,6,7,8-tetrahydrofolate + H(+). It participates in nucleotide-sugar biosynthesis; UDP-4-deoxy-4-formamido-beta-L-arabinose biosynthesis; UDP-4-deoxy-4-formamido-beta-L-arabinose from UDP-alpha-D-glucuronate: step 1/3. It functions in the pathway nucleotide-sugar biosynthesis; UDP-4-deoxy-4-formamido-beta-L-arabinose biosynthesis; UDP-4-deoxy-4-formamido-beta-L-arabinose from UDP-alpha-D-glucuronate: step 3/3. The protein operates within bacterial outer membrane biogenesis; lipopolysaccharide biosynthesis. Functionally, bifunctional enzyme that catalyzes the oxidative decarboxylation of UDP-glucuronic acid (UDP-GlcUA) to UDP-4-keto-arabinose (UDP-Ara4O) and the addition of a formyl group to UDP-4-amino-4-deoxy-L-arabinose (UDP-L-Ara4N) to form UDP-L-4-formamido-arabinose (UDP-L-Ara4FN). The modified arabinose is attached to lipid A and is required for resistance to polymyxin and cationic antimicrobial peptides. The chain is Bifunctional polymyxin resistance protein ArnA (arnA) from Salmonella typhimurium (strain LT2 / SGSC1412 / ATCC 700720).